The chain runs to 104 residues: Large ribosomal subunit protein uL24 (104 aa).

Belongs to the universal ribosomal protein uL24 family. Part of the 50S ribosomal subunit.

In terms of biological role, one of two assembly initiator proteins, it binds directly to the 5'-end of the 23S rRNA, where it nucleates assembly of the 50S subunit. Its function is as follows. One of the proteins that surrounds the polypeptide exit tunnel on the outside of the subunit. This Shewanella sediminis (strain HAW-EB3) protein is Large ribosomal subunit protein uL24.